Reading from the N-terminus, the 772-residue chain is Angiomotin-like protein 2 (772 aa).

Disordered regions lie at residues 41–158 (GGAG…HVRS), 170–239 (RNGA…SPHF), and 260–299 (QYQY…PSAQ). Basic and acidic residues-rich tracts occupy residues 80 to 91 (QGGETHLAENRL), 100 to 112 (KGEE…EAKA), and 142 to 153 (RRQDEALRELRH). A required for interaction with CDH5 region spans residues 101–303 (GEELPTYEEA…GPPSAQATLG (203 aa)). Phosphotyrosine; by FGFR1 is present on Tyr-107. Residues 178 to 191 (HMSSSHSFPQLARS) are compositionally biased toward polar residues. Over residues 197 to 214 (PRGPPAEGPEPRGPPPQY) the composition is skewed to pro residues. Residues 221–303 (QETAAVTDPR…GPPSAQATLG (83 aa)) are required for interaction with CDH1. Residues 305–578 (AHLAQMETVL…KYLEERAMRQ (274 aa)) are a coiled coil. Residues Lys-343 and Lys-404 each participate in a glycyl lysine isopeptide (Lys-Gly) (interchain with G-Cter in ubiquitin) cross-link. Disordered stretches follow at residues 596–615 (IRHS…LLPG) and 680–752 (GLVS…RTPS). A compositionally biased stretch (basic and acidic residues) spans 686 to 699 (RQTDARPAGDRVPA). The span at 718 to 733 (DGSTQTDGPADNTSAC) shows a compositional bias: polar residues. Phosphoserine occurs at positions 752 and 755. The PDZ-binding signature appears at 769-772 (EILI).

This sequence belongs to the angiomotin family. Part of a complex composed of AMOTL2, MAGI1 and CDH5, within the complex AMOTL2 acts as a scaffold protein for the interaction of MAGI1 with CDH5. The complex is required for coupling actin fibers to cell junctions in endothelial cells. Within the complex AMOTL2 (via its N-terminus) interacts with CDH5. Interacts (via N-terminus) with MAGI1. Interacts (via N-terminus) with ACTB; the interaction facilitates binding of cell junction complexes to actin fibers in endothelial cells. Interacts with CDH1; the interaction may facilitate binding of radial actin fibers to cell junction complexes. Interacts with SRC. Interacts with YAP1; the interaction is required for ubiquitination of AMOTL2 and localization of YAP1 to tight junctions. Interacts with WWP1; the interaction facilitates WWP1 interaction with the Crumbs complex and subsequent WWP1 translocation to the plasma membrane. WWP1 interaction with the Crumbs complex promotes WWP1 monoubiquitination of AMOTL2 which subsequently activates the Hippo signaling pathway. When ubiquitinated interacts with LATS2 (via UBA domain); the interaction promotes LATS2 phosphorylation of YAP1. Interacts (via PPXY motif) with WWTR1/TAZ (via WW domain); the interaction promotes WWTR1/TAZ localization to the cytoplasm and thereby inhibition of its transcriptional properties. Interacts with PHLDB2; interaction may facilitate PHLDB2 localization to the myotube podosome cortex that surrounds the core. Phosphorylation at Tyr-107 is necessary for efficient binding to SRC and synergistically functioning with SRC to activate the downstream MAPK pathway. In terms of processing, monoubiquitinated at Lys-343 and Lys-404 by Crumbs complex-bound WWP1. De-ubiquitinated at Lys-343 and Lys-404 by USP9X; the interaction may be promoted by cell contact inhibition. Deubiquitination of AMOTL2 negatively regulates Hippo signaling activation. Expressed in skeletal muscle at neuromuscular junctions (at protein level).

It is found in the recycling endosome. It localises to the cytoplasm. The protein localises to the cell projection. Its subcellular location is the podosome. The protein resides in the cell junction. Its function is as follows. Regulates the translocation of phosphorylated SRC to peripheral cell-matrix adhesion sites. Required for proper architecture of actin filaments. Plays a role in coupling actin fibers to cell junctions in endothelial cells and is therefore required for correct endothelial cell morphology via facilitating transcellular transmission of mechanical force resulting in endothelial cell elongation. Required for the anchoring of radial actin fibers to CDH1 junction complexes at the cell membrane which facilitates organization of radial actin fiber structure and cellular response to contractile forces. This contributes to maintenance of cell area, size, shape, epithelial sheet organization and trophectoderm cell properties that facilitate blastocyst zona hatching. Inhibits the Wnt/beta-catenin signaling pathway, probably by recruiting CTNNB1 to recycling endosomes and hence preventing its translocation to the nucleus. Participates in angiogenesis. Activates the Hippo signaling pathway in response to cell contact inhibition via interaction with and ubiquitination by Crumbs complex-bound WWP1. Ubiquitinated AMOTL2 then interacts with LATS2 which in turn phosphorylates YAP1, excluding it from the nucleus and localizing it to the cytoplasm and tight junctions, therefore ultimately repressing YAP1-driven transcription of target genes. Acts to inhibit WWTR1/TAZ transcriptional coactivator activity via sequestering WWTR1/TAZ in the cytoplasm and at tight junctions. Regulates the size and protein composition of the podosome cortex and core at myofibril neuromuscular junctions. Selectively promotes FGF-induced MAPK activation through SRC. May play a role in the polarity, proliferation and migration of endothelial cells. This chain is Angiomotin-like protein 2, found in Mus musculus (Mouse).